The primary structure comprises 258 residues: Small ribosomal subunit protein mS23 (258 aa).

The protein belongs to the mitochondrion-specific ribosomal protein mS23 family. In terms of assembly, component of the mitochondrial small ribosomal subunit.

The protein localises to the mitochondrion. In Aspergillus fumigatus (strain CBS 144.89 / FGSC A1163 / CEA10) (Neosartorya fumigata), this protein is Small ribosomal subunit protein mS23.